A 372-amino-acid polypeptide reads, in one-letter code: MRVMAAMSGGVDSSVAAARLVAEGHEVIGVHLALASTPTTLRVGSRGCCSLEDSGDARRVADALGIPFYVWDFSDRFREDVVDPFINSYEMGETPNPCLRCNEKIKFQALLDRGIALGFDAVATGHYARLKDGELRRAIDDNKDQSYVLGVLNDEQLAHCLFPLGDTRKPDIRKEAEAAGLVTASKPDSHDICFIPDGNTKAFLGNHIGVRSGDLKDQDGNVIGHHDGIYGFTIGQRKGLGLPGPAPDGKPRYVTDIDADTGTVTVGTRDDLRVGRLYADRLIRLDEHEGSTQECQVQVRAHGGVVDATVTIDDGVATIDLHSPLTGVARGQAAVIYRPDPDGDIVLGSGTICDTVSVSKLQPTTAGASSNS.

Residues 6 to 13 (AMSGGVDS) and Leu32 each bind ATP. The active-site Nucleophile is the Cys101. Cys101 and Cys193 are disulfide-bonded. Gly125 is an ATP binding site. Residues 143–145 (KDQ) form an interaction with tRNA region. The active-site Cysteine persulfide intermediate is the Cys193.

This sequence belongs to the MnmA/TRMU family.

The protein localises to the cytoplasm. The catalysed reaction is S-sulfanyl-L-cysteinyl-[protein] + uridine(34) in tRNA + AH2 + ATP = 2-thiouridine(34) in tRNA + L-cysteinyl-[protein] + A + AMP + diphosphate + H(+). Functionally, catalyzes the 2-thiolation of uridine at the wobble position (U34) of tRNA, leading to the formation of s(2)U34. The polypeptide is tRNA-specific 2-thiouridylase MnmA (Corynebacterium kroppenstedtii (strain DSM 44385 / JCM 11950 / CIP 105744 / CCUG 35717)).